A 304-amino-acid polypeptide reads, in one-letter code: MHIRILGSAAGGGFPQWNCNCRNCRGVRDGSVAAQPRTQSSIALSDDGERWILCNASPDIRAQIAAFPALQPARRPRDTAIGAIVLLDSQIDHTTGLLSLREGCPHEVWCTQMVHQDLSEGFPLFPMLSHWNGGLRHRPIALDGEPFAIPACPRLRFTAIPLRSSAPPYSPHRGDPHPGDNIGLFVEDLDSAGALFYAPGLGEVDEALLEWMRRADCLLVDGTLWRDDEMLVCEVGDKLGRQMGHLAQSGPGGMLEVLAKVPAARKVLIHINNTNPILDTASAERAELDASGIEVAWDGMHIQL.

It belongs to the PqqB family.

The protein operates within cofactor biosynthesis; pyrroloquinoline quinone biosynthesis. May be involved in the transport of PQQ or its precursor to the periplasm. The chain is Coenzyme PQQ synthesis protein B from Pseudomonas aeruginosa (strain ATCC 15692 / DSM 22644 / CIP 104116 / JCM 14847 / LMG 12228 / 1C / PRS 101 / PAO1).